Consider the following 91-residue polypeptide: NADH-ubiquinone oxidoreductase chain 4L (91 aa).

2 helical membrane passes run 2-22 (LIMILIFLIALLGLGLSQTHL) and 38-58 (LGLGMVSISGLHYPLMIALVL).

Belongs to the complex I subunit 4L family.

The protein resides in the mitochondrion membrane. It catalyses the reaction a ubiquinone + NADH + 5 H(+)(in) = a ubiquinol + NAD(+) + 4 H(+)(out). Core subunit of the mitochondrial membrane respiratory chain NADH dehydrogenase (Complex I) that is believed to belong to the minimal assembly required for catalysis. Complex I functions in the transfer of electrons from NADH to the respiratory chain. The immediate electron acceptor for the enzyme is believed to be ubiquinone. The chain is NADH-ubiquinone oxidoreductase chain 4L (ND4L) from Branchiostoma floridae (Florida lancelet).